The following is a 214-amino-acid chain: Adenylate kinase (214 aa).

Gly-10–Thr-15 is an ATP binding site. Residues Ser-30–Val-59 form an NMP region. AMP is bound by residues Thr-31, Arg-36, Lys-57–Val-59, Gly-85–Arg-88, and Gln-92. Residues Gly-122–Asp-159 form an LID region. Residues Arg-123 and Val-132–Tyr-133 contribute to the ATP site. Arg-156 and Arg-167 together coordinate AMP. Arg-200 is an ATP binding site.

This sequence belongs to the adenylate kinase family. As to quaternary structure, monomer.

Its subcellular location is the cytoplasm. It carries out the reaction AMP + ATP = 2 ADP. The protein operates within purine metabolism; AMP biosynthesis via salvage pathway; AMP from ADP: step 1/1. Catalyzes the reversible transfer of the terminal phosphate group between ATP and AMP. Plays an important role in cellular energy homeostasis and in adenine nucleotide metabolism. This Sodalis glossinidius (strain morsitans) protein is Adenylate kinase.